A 620-amino-acid chain; its full sequence is Chaperone protein HscA homolog (620 aa).

It belongs to the heat shock protein 70 family.

In terms of biological role, chaperone involved in the maturation of iron-sulfur cluster-containing proteins. Has a low intrinsic ATPase activity which is markedly stimulated by HscB. The polypeptide is Chaperone protein HscA homolog (Neisseria meningitidis serogroup B (strain ATCC BAA-335 / MC58)).